A 628-amino-acid polypeptide reads, in one-letter code: Basal cell adhesion molecule (628 aa).

The signal sequence occupies residues 1 to 31 (MEPPDAPAQARGAPRLLLLAVLLAAHPDAQA). Ig-like V-type domains follow at residues 32 to 142 (EVRL…ARLN) and 147 to 257 (PEAT…PTFH). Residues 32–547 (EVRLSVPPLV…GTVSPQTSQA (516 aa)) are Extracellular-facing. 3 disulfide bridges follow: cysteine 53–cysteine 125, cysteine 172–cysteine 237, and cysteine 291–cysteine 337. 3 Ig-like C2-type domains span residues 274 to 355 (PSTP…KTLE), 363 to 441 (PLEL…QNFT), and 448 to 541 (PELK…GTVS). Positions 309 to 312 (EQEE) are interaction with laminin alpha5. N-linked (GlcNAc...) asparagine glycans are attached at residues asparagine 321, asparagine 377, asparagine 383, asparagine 419, and asparagine 439. Cysteine 384 and cysteine 424 are disulfide-bonded. An intrachain disulfide couples cysteine 473 to cysteine 522. A helical membrane pass occupies residues 548-568 (GVAVMAVAVSVGLLLLVVAVF). The Cytoplasmic portion of the chain corresponds to 569–628 (YCVRRKGGPCCRQRREKGAPPPGEPGLSHSGSEQPEQTGLLMGGASGGARGGSGGFGDEC). Residues 579–628 (CRQRREKGAPPPGEPGLSHSGSEQPEQTGLLMGGASGGARGGSGGFGDEC) are disordered. The residue at position 596 (serine 596) is a Phosphoserine; by GSK3. Serine 598 carries the post-translational modification Phosphoserine; by CK2. Phosphoserine is present on serine 600. Over residues 609–628 (LMGGASGGARGGSGGFGDEC) the composition is skewed to gly residues. Phosphoserine; by PKA or PKB/AKT1 is present on serine 621.

In terms of assembly, homodimer. Interacts with ITGA4:ITGB1. Interacts with spectrins SPTA1 and SPTB1. Epinephrine-stimulated phosphorylation of Ser-621 by PKA enhances adhesion to laminin. Ser-621 can also be phosphorylated by AKT1. As to expression, wide tissue distribution (highest in the pancreas and very low in brain). Closely associated with the basal layer of cells in epithelia and the endothelium of blood vessel walls.

The protein localises to the cell membrane. Functionally, transmembrane glycoprotein that functions as both a receptor and an adhesion molecule playing a crucial role in cell adhesion, motility, migration and invasion. Extracellular domain enables binding to extracellular matrix proteins, such as laminin, integrin and other ligands while its intracellular domain interacts with cytoskeletal proteins like hemoglobin, facilitating cell signal transduction. Serves as a receptor for laminin alpha-5/LAMA5 to promote cell adhesion. Mechanistically, JAK2 induces BCAM phosphorylation and activates its adhesion to laminin by stimulating a Rap1/AKT signaling pathway in the absence of EPOR. The protein is Basal cell adhesion molecule (BCAM) of Homo sapiens (Human).